The chain runs to 59 residues: uncharacterized protein (59 aa).

Composition is skewed to basic and acidic residues over residues 1-23 (MAEHRGGSGNFAEDREKASDAGR) and 36-45 (DPQRASEAGK). Positions 1–59 (MAEHRGGSGNFAEDREKASDAGRKGGQHSGGNFKNDPQRASEAGKKGGQQSGGNKSGKS) are disordered. Over residues 46 to 59 (KGGQQSGGNKSGKS) the composition is skewed to gly residues.

This sequence belongs to the con-10 family.

This is an uncharacterized protein from Escherichia coli (strain K12).